The primary structure comprises 583 residues: Phosphoglucomutase, cytoplasmic 2 (583 aa).

Residues arginine 25 and serine 124 each coordinate alpha-D-glucose 1,6-bisphosphate. Catalysis depends on serine 124, which acts as the Phosphoserine intermediate. 4 residues coordinate Mg(2+): serine 124, aspartate 300, aspartate 302, and aspartate 304. Serine 124 is subject to Phosphoserine. Alpha-D-glucose 1,6-bisphosphate-binding residues include aspartate 304, arginine 305, threonine 368, glutamate 387, serine 389, and lysine 400.

Belongs to the phosphohexose mutase family. Monomer. Mg(2+) serves as cofactor.

It localises to the cytoplasm. It catalyses the reaction alpha-D-glucose 1-phosphate = alpha-D-glucose 6-phosphate. The catalysed reaction is O-phospho-L-seryl-[protein] + alpha-D-glucose 1-phosphate = alpha-D-glucose 1,6-bisphosphate + L-seryl-[protein]. It carries out the reaction alpha-D-glucose 1,6-bisphosphate + L-seryl-[protein] = O-phospho-L-seryl-[protein] + alpha-D-glucose 6-phosphate. Catalyzes the reversible isomerization of alpha-D-glucose 1-phosphate to alpha-D-glucose 6-phosphate. The mechanism proceeds via the intermediate compound alpha-D-glucose 1,6-bisphosphate. This enzyme participates in both the breakdown and synthesis of glucose. In Zea mays (Maize), this protein is Phosphoglucomutase, cytoplasmic 2.